A 194-amino-acid polypeptide reads, in one-letter code: 3-isopropylmalate dehydratase small subunit (194 aa).

Belongs to the LeuD family. LeuD type 1 subfamily. As to quaternary structure, heterodimer of LeuC and LeuD.

The enzyme catalyses (2R,3S)-3-isopropylmalate = (2S)-2-isopropylmalate. The protein operates within amino-acid biosynthesis; L-leucine biosynthesis; L-leucine from 3-methyl-2-oxobutanoate: step 2/4. Functionally, catalyzes the isomerization between 2-isopropylmalate and 3-isopropylmalate, via the formation of 2-isopropylmaleate. The protein is 3-isopropylmalate dehydratase small subunit of Leuconostoc mesenteroides subsp. mesenteroides (strain ATCC 8293 / DSM 20343 / BCRC 11652 / CCM 1803 / JCM 6124 / NCDO 523 / NBRC 100496 / NCIMB 8023 / NCTC 12954 / NRRL B-1118 / 37Y).